The chain runs to 563 residues: Arginine--tRNA ligase (563 aa).

Residues 121–131 (PNIAKPFSIGH) carry the 'HIGH' region motif.

This sequence belongs to the class-I aminoacyl-tRNA synthetase family. As to quaternary structure, monomer.

Its subcellular location is the cytoplasm. It catalyses the reaction tRNA(Arg) + L-arginine + ATP = L-arginyl-tRNA(Arg) + AMP + diphosphate. The chain is Arginine--tRNA ligase from Streptococcus agalactiae serotype III (strain NEM316).